The chain runs to 1113 residues: Protein translocase subunit SecA (1113 aa).

ATP contacts are provided by residues Gln-175, Gly-193–Thr-197, and Asp-694. Basic and acidic residues predominate over residues Arg-1042–Ala-1072. Residues Arg-1042–Leu-1113 form a disordered region. Positions 1097, 1099, 1108, and 1109 each coordinate Zn(2+). Over residues Lys-1103–Leu-1113 the composition is skewed to basic residues.

This sequence belongs to the SecA family. Monomer and homodimer. Part of the essential Sec protein translocation apparatus which comprises SecA, SecYEG and auxiliary proteins SecDF. Other proteins may also be involved. The cofactor is Zn(2+).

It localises to the cell inner membrane. The protein localises to the cytoplasm. The catalysed reaction is ATP + H2O + cellular proteinSide 1 = ADP + phosphate + cellular proteinSide 2.. In terms of biological role, part of the Sec protein translocase complex. Interacts with the SecYEG preprotein conducting channel. Has a central role in coupling the hydrolysis of ATP to the transfer of proteins into and across the cell membrane, serving as an ATP-driven molecular motor driving the stepwise translocation of polypeptide chains across the membrane. This is Protein translocase subunit SecA from Porphyromonas gingivalis (strain ATCC 33277 / DSM 20709 / CIP 103683 / JCM 12257 / NCTC 11834 / 2561).